Reading from the N-terminus, the 475-residue chain is Doublecortin domain-containing protein 2 (475 aa).

2 consecutive Doublecortin domains span residues 17–100 (KSVL…LNYL) and 139–221 (CTIF…LPYS). A disordered region spans residues 234 to 475 (YGQKASSLPP…EANKASSAVA (242 aa)). Polar residues predominate over residues 252 to 272 (GSGNYRQSKSTIGSSDNSSPQ). Ser270 carries the post-translational modification Phosphoserine. The span at 353-365 (EKTSKDANQKEDF) shows a compositional bias: basic and acidic residues. Over residues 407 to 425 (TDEENGEELDQVAEELQPT) the composition is skewed to acidic residues.

As to quaternary structure, interacts with DVL1, DVL2 and DVL3. As to expression, expressed in hair cells of the inner ear.

It localises to the cell projection. It is found in the cilium. Its subcellular location is the cytoplasm. The protein localises to the cytoskeleton. The protein resides in the cilium axoneme. It localises to the kinocilium. Its function is as follows. Protein that plays a role in the inhibition of canonical Wnt signaling pathway. May be involved in neuronal migration during development of the cerebral neocortex. Involved in the control of ciliogenesis and ciliary length. This is Doublecortin domain-containing protein 2 (Dcdc2) from Mus musculus (Mouse).